Consider the following 433-residue polypeptide: UDP-N-acetylglucosamine 1-carboxyvinyltransferase (433 aa).

Position 34–35 (34–35 (KN)) interacts with phosphoenolpyruvate. Arg104 is a binding site for UDP-N-acetyl-alpha-D-glucosamine. Catalysis depends on Cys128, which acts as the Proton donor. Cys128 carries the 2-(S-cysteinyl)pyruvic acid O-phosphothioketal modification. UDP-N-acetyl-alpha-D-glucosamine is bound by residues Asp320 and Ile342.

Belongs to the EPSP synthase family. MurA subfamily.

The protein resides in the cytoplasm. The catalysed reaction is phosphoenolpyruvate + UDP-N-acetyl-alpha-D-glucosamine = UDP-N-acetyl-3-O-(1-carboxyvinyl)-alpha-D-glucosamine + phosphate. The protein operates within cell wall biogenesis; peptidoglycan biosynthesis. Its function is as follows. Cell wall formation. Adds enolpyruvyl to UDP-N-acetylglucosamine. This Parasynechococcus marenigrum (strain WH8102) protein is UDP-N-acetylglucosamine 1-carboxyvinyltransferase.